We begin with the raw amino-acid sequence, 565 residues long: Arginine--tRNA ligase (565 aa).

Residues 120–130 carry the 'HIGH' region motif; it reads PNIAKPFHVGH.

This sequence belongs to the class-I aminoacyl-tRNA synthetase family. In terms of assembly, monomer.

It localises to the cytoplasm. The enzyme catalyses tRNA(Arg) + L-arginine + ATP = L-arginyl-tRNA(Arg) + AMP + diphosphate. The sequence is that of Arginine--tRNA ligase from Clostridium perfringens (strain 13 / Type A).